The sequence spans 677 residues: Secretogranin-1 (677 aa).

Residues 1–20 (MQPTLLLSLLGAVGLAAVNS) form the signal peptide. Cys36 and Cys57 form a disulfide bridge. Composition is skewed to basic and acidic residues over residues 64–100 (SRKD…ESSS) and 118–136 (ADTE…RADE). Residues 64–463 (SRKDVKDKET…DKARRHPQGA (400 aa)) are disordered. Thr79 carries the post-translational modification Phosphothreonine. Residues Ser93, Ser99, and Ser100 each carry the phosphoserine modification. O-linked (Xyl...) (chondroitin sulfate) serine glycosylation is present at Ser93. Positions 116 to 120 (TKADT) are O-glycosylated at one site. Ser130 bears the Phosphoserine; by FAM20C mark. Position 149 is a phosphoserine (Ser149). Composition is skewed to basic and acidic residues over residues 150–162 (EEVK…KSQR), 172–190 (NYQK…HLEE), and 200–236 (NERK…EKSS). Position 183 is a phosphoserine (Ser183). A Phosphoserine; by FAM20C modification is found at Ser225. A glycan (O-linked (Xyl...) (chondroitin sulfate) serine) is linked at Ser239. A phosphoserine mark is found at Ser259 and Ser263. Residues 262-272 (ESEEGEEDATS) show a composition bias toward acidic residues. The span at 277–287 (RRTRPRHHHGR) shows a compositional bias: basic residues. A phosphoserine mark is found at Ser293, Ser294, Ser311, and Ser335. Tyr341 carries the post-translational modification Sulfotyrosine. Residues 359-372 (WERYRGRGSEEYRA) show a composition bias toward basic and acidic residues. A phosphoserine; by FAM20C mark is found at Ser367, Ser377, and Ser380. 2 stretches are compositionally biased toward basic and acidic residues: residues 384–415 (EDKR…EPGK) and 433–455 (DTRE…QMDK). Tyr401 is modified (phosphotyrosine). Residue Ser405 is modified to Phosphoserine. Position 474 is a sulfotyrosine (Tyr474). The segment at 475–512 (GEEGAPGKWQQQGDLQDTKENREEARFQDKQYSSHHTA) is disordered. Over residues 490 to 503 (QDTKENREEARFQD) the composition is skewed to basic and acidic residues. Ser533 and Ser534 each carry phosphoserine. A Sulfotyrosine modification is found at Tyr566. Ser617 is subject to Phosphoserine. The interval 622 to 653 (DFYDSEEPVSTHQEAENEKDRADQTVLTEDEK) is disordered. Residue Tyr624 is modified to Sulfotyrosine. Ser626 and Ser631 each carry phosphoserine. A compositionally biased stretch (basic and acidic residues) spans 634-653 (QEAENEKDRADQTVLTEDEK).

Belongs to the chromogranin/secretogranin protein family. In terms of assembly, interacts with ITPR1 in the secretory granules. Post-translationally, extensively processed by limited proteolysis at conserved basic residues. Alternative processing are seen in different tissues. O-glycosylated. In terms of tissue distribution, detected in cerebrospinal fluid and urine (at protein level). Expressed in the adrenal medulla, and in pheochromocytoma. Not expressed in liver.

It localises to the secreted. Secretogranin-1 is a neuroendocrine secretory granule protein, which may be the precursor for other biologically active peptides. The chain is Secretogranin-1 (CHGB) from Homo sapiens (Human).